Here is a 196-residue protein sequence, read N- to C-terminus: Putative NADH dehydrogenase/NAD(P)H nitroreductase xcc-b100_0585 (196 aa).

The protein belongs to the nitroreductase family. HadB/RutE subfamily. FMN is required as a cofactor.

The protein is Putative NADH dehydrogenase/NAD(P)H nitroreductase xcc-b100_0585 of Xanthomonas campestris pv. campestris (strain B100).